A 337-amino-acid chain; its full sequence is 1-aminocyclopropane-1-carboxylate deaminase (337 aa).

N6-(pyridoxal phosphate)lysine is present on lysine 50. The active-site Nucleophile is the serine 77.

This sequence belongs to the ACC deaminase/D-cysteine desulfhydrase family. Homotrimer. Pyridoxal 5'-phosphate is required as a cofactor.

The enzyme catalyses 1-aminocyclopropane-1-carboxylate + H2O = 2-oxobutanoate + NH4(+). Catalyzes a cyclopropane ring-opening reaction, the irreversible conversion of 1-aminocyclopropane-1-carboxylate (ACC) to ammonia and alpha-ketobutyrate. Allows growth on ACC as a nitrogen source. This is 1-aminocyclopropane-1-carboxylate deaminase from Methylobacterium sp. (strain 4-46).